Reading from the N-terminus, the 619-residue chain is tRNA uridine 5-carboxymethylaminomethyl modification enzyme MnmG (619 aa).

Residues 14–19 (GAGHAG), V126, and S181 each bind FAD. Residue 273 to 287 (GPRYCPSIEDKIMRF) participates in NAD(+) binding. Position 370 (Q370) interacts with FAD.

The protein belongs to the MnmG family. As to quaternary structure, homodimer. Heterotetramer of two MnmE and two MnmG subunits. FAD is required as a cofactor.

It is found in the cytoplasm. NAD-binding protein involved in the addition of a carboxymethylaminomethyl (cmnm) group at the wobble position (U34) of certain tRNAs, forming tRNA-cmnm(5)s(2)U34. This Syntrophotalea carbinolica (strain DSM 2380 / NBRC 103641 / GraBd1) (Pelobacter carbinolicus) protein is tRNA uridine 5-carboxymethylaminomethyl modification enzyme MnmG.